We begin with the raw amino-acid sequence, 288 residues long: Pantothenate synthetase (288 aa).

An ATP-binding site is contributed by 35–42 (MGALHDGH). The active-site Proton donor is the H42. Residue Q66 coordinates (R)-pantoate. Q66 contributes to the beta-alanine binding site. 152–155 (GEKD) is a binding site for ATP. Residue Q158 coordinates (R)-pantoate. Residues G181 and 189–192 (LSSR) each bind ATP.

The protein belongs to the pantothenate synthetase family. As to quaternary structure, homodimer.

The protein resides in the cytoplasm. The catalysed reaction is (R)-pantoate + beta-alanine + ATP = (R)-pantothenate + AMP + diphosphate + H(+). It participates in cofactor biosynthesis; (R)-pantothenate biosynthesis; (R)-pantothenate from (R)-pantoate and beta-alanine: step 1/1. Functionally, catalyzes the condensation of pantoate with beta-alanine in an ATP-dependent reaction via a pantoyl-adenylate intermediate. In Maricaulis maris (strain MCS10) (Caulobacter maris), this protein is Pantothenate synthetase.